The following is a 606-amino-acid chain: Elongation factor 4 (606 aa).

Positions 11–193 (DKIRNFSIVA…AIVTRLPPPK (183 aa)) constitute a tr-type G domain. Residues 23 to 28 (DHGKST) and 140 to 143 (NKVD) each bind GTP.

The protein belongs to the TRAFAC class translation factor GTPase superfamily. Classic translation factor GTPase family. LepA subfamily.

Its subcellular location is the cell inner membrane. It carries out the reaction GTP + H2O = GDP + phosphate + H(+). Required for accurate and efficient protein synthesis under certain stress conditions. May act as a fidelity factor of the translation reaction, by catalyzing a one-codon backward translocation of tRNAs on improperly translocated ribosomes. Back-translocation proceeds from a post-translocation (POST) complex to a pre-translocation (PRE) complex, thus giving elongation factor G a second chance to translocate the tRNAs correctly. Binds to ribosomes in a GTP-dependent manner. The chain is Elongation factor 4 from Caulobacter vibrioides (strain ATCC 19089 / CIP 103742 / CB 15) (Caulobacter crescentus).